The following is a 503-amino-acid chain: Probable DNA double-strand break repair helicase HerA (503 aa).

Residues Arg-122, 131-136 (GGGKSN), and 478-479 (KI) contribute to the ATP site.

It belongs to the HerA family.

It carries out the reaction Couples ATP hydrolysis with the unwinding of duplex DNA at the replication fork by translocating in the 5'-3' direction. This creates two antiparallel DNA single strands (ssDNA). The leading ssDNA polymer is the template for DNA polymerase III holoenzyme which synthesizes a continuous strand.. It catalyses the reaction ATP + H2O = ADP + phosphate + H(+). The catalysed reaction is Couples ATP hydrolysis with the unwinding of duplex DNA by translocating in the 3'-5' direction.. Its function is as follows. Involved in DNA double-strand break (DSB) repair. Probably acts with NurA to stimulate resection of the 5' strand and produce the long 3' single-strand that is required for RadA loading. Has DNA-dependent ATPase activity and DNA helicase activity. The sequence is that of Probable DNA double-strand break repair helicase HerA from Methanocaldococcus jannaschii (strain ATCC 43067 / DSM 2661 / JAL-1 / JCM 10045 / NBRC 100440) (Methanococcus jannaschii).